Reading from the N-terminus, the 494-residue chain is NADH-quinone oxidoreductase subunit N 2 (494 aa).

The next 14 helical transmembrane spans lie at 14 to 34 (LPQI…GMLL), 45 to 65 (IAML…PLTA), 82 to 102 (VVQV…GSVL), 116 to 136 (IGEF…LVST), 139 to 159 (LLLI…LTAF), 174 to 194 (FLFG…LYGV), 214 to 234 (LLVA…AAPF), 262 to 282 (FFVF…NAAW), 289 to 309 (WMPI…LAAL), 317 to 337 (LLAY…IAHT), 344 to 364 (LLYY…VLAI), 388 to 408 (ACLL…GFFA), 422 to 442 (AFGL…ALFY), and 470 to 490 (ITLL…NLLM).

This sequence belongs to the complex I subunit 2 family. NDH-1 is composed of 14 different subunits. Subunits NuoA, H, J, K, L, M, N constitute the membrane sector of the complex.

The protein resides in the cell inner membrane. It carries out the reaction a quinone + NADH + 5 H(+)(in) = a quinol + NAD(+) + 4 H(+)(out). NDH-1 shuttles electrons from NADH, via FMN and iron-sulfur (Fe-S) centers, to quinones in the respiratory chain. The immediate electron acceptor for the enzyme in this species is believed to be ubiquinone. Couples the redox reaction to proton translocation (for every two electrons transferred, four hydrogen ions are translocated across the cytoplasmic membrane), and thus conserves the redox energy in a proton gradient. The chain is NADH-quinone oxidoreductase subunit N 2 from Acidobacterium capsulatum (strain ATCC 51196 / DSM 11244 / BCRC 80197 / JCM 7670 / NBRC 15755 / NCIMB 13165 / 161).